Here is a 401-residue protein sequence, read N- to C-terminus: Diphosphomevalonate decarboxylase (401 aa).

Ala-2 carries the N-acetylalanine modification. Residues 24–27 (YWGK), Arg-79, 157–162 (SGSACR), and Thr-213 each bind (R)-5-diphosphomevalonate. The disordered stretch occupies residues 382–401 (VLDDPHHHLLGPDGLPQRDL).

Belongs to the diphosphomevalonate decarboxylase family. Homodimer.

Its subcellular location is the cytoplasm. It catalyses the reaction (R)-5-diphosphomevalonate + ATP = isopentenyl diphosphate + ADP + phosphate + CO2. It participates in steroid biosynthesis; cholesterol biosynthesis. Catalyzes the ATP dependent decarboxylation of (R)-5-diphosphomevalonate to form isopentenyl diphosphate (IPP). Functions in the mevalonate (MVA) pathway leading to isopentenyl diphosphate (IPP), a key precursor for the biosynthesis of isoprenoids and sterol synthesis. This Rattus norvegicus (Rat) protein is Diphosphomevalonate decarboxylase (Mvd).